A 1374-amino-acid chain; its full sequence is DNA-directed RNA polymerase subunit beta (1374 aa).

The protein belongs to the RNA polymerase beta chain family. In terms of assembly, the RNAP catalytic core consists of 2 alpha, 1 beta, 1 beta' and 1 omega subunit. When a sigma factor is associated with the core the holoenzyme is formed, which can initiate transcription.

The enzyme catalyses RNA(n) + a ribonucleoside 5'-triphosphate = RNA(n+1) + diphosphate. In terms of biological role, DNA-dependent RNA polymerase catalyzes the transcription of DNA into RNA using the four ribonucleoside triphosphates as substrates. The chain is DNA-directed RNA polymerase subunit beta from Rickettsia typhi (strain ATCC VR-144 / Wilmington).